Here is a 261-residue protein sequence, read N- to C-terminus: MVELRLPSNSVVKKGRVHKAQQEMLKPRKVQVYRYDPDLNKNPTIDSFEIDLSKTGPMVLDALIKIKNEIDSTLTFRRSCREGICGSCAMNIDGTNTLACIKPIEDISGDIKIYPLPHMKVVKDLVPDMSHFYTQYESIEPWLKNDNPAPSNSERLQSIQDREKLDGLYECILCACCSTSCPSYWWNSDKYLGPAILLQAYRWIADSRDDNTGARLEALEDPFKLYRCHTIMNCTKTCPKGLNPAKAIGRVKSLIAERHGV.

Residues Arg28 to Met119 enclose the 2Fe-2S ferredoxin-type domain. [2Fe-2S] cluster contacts are provided by Cys80, Cys85, and Cys100. A 4Fe-4S ferredoxin-type domain is found at Asp161–Tyr191. Cys171, Cys174, and Cys177 together coordinate [4Fe-4S] cluster. Cys181 provides a ligand contact to [3Fe-4S] cluster. Trp186 provides a ligand contact to a ubiquinone. Residues Cys228 and Cys234 each contribute to the [3Fe-4S] cluster site. Cys238 is a [4Fe-4S] cluster binding site.

This sequence belongs to the succinate dehydrogenase/fumarate reductase iron-sulfur protein family. Part of an enzyme complex containing four subunits: a flavoprotein, an iron-sulfur, cytochrome b-556, and a hydrophobic anchor protein. [2Fe-2S] cluster is required as a cofactor. [3Fe-4S] cluster serves as cofactor. Requires [4Fe-4S] cluster as cofactor.

It catalyses the reaction a quinone + succinate = fumarate + a quinol. It functions in the pathway carbohydrate metabolism; tricarboxylic acid cycle; fumarate from succinate (bacterial route): step 1/1. This Rickettsia typhi (strain ATCC VR-144 / Wilmington) protein is Succinate dehydrogenase iron-sulfur subunit (sdhB).